The chain runs to 628 residues: ATP-dependent zinc metalloprotease FtsH 4 (628 aa).

Residues 1–14 (MAIKPQPQWQRRLA) are Cytoplasmic-facing. Residues 15–35 (SVLLWGSTIYLLVNLLAPALF) form a helical membrane-spanning segment. The Lumenal portion of the chain corresponds to 36-119 (RSQPPQVPYS…AAAPPAKNSW (84 aa)). The helical transmembrane segment at 120-140 (FGTLLSWVIPPLIFVGIWSFF) threads the bilayer. Residues 141–628 (LNRNNNGAPG…QVQAPGTLVV (488 aa)) lie on the Cytoplasmic side of the membrane. 214-221 (GPPGTGKT) provides a ligand contact to ATP. Position 438 (H438) interacts with Zn(2+). Residue E439 is part of the active site. The Zn(2+) site is built by H442 and D515.

The protein in the central section; belongs to the AAA ATPase family. In the C-terminal section; belongs to the peptidase M41 family. In terms of assembly, homohexamer. It depends on Zn(2+) as a cofactor.

Its subcellular location is the cellular thylakoid membrane. Functionally, acts as a processive, ATP-dependent zinc metallopeptidase for both cytoplasmic and membrane proteins. Plays a role in the quality control of integral membrane proteins. This is ATP-dependent zinc metalloprotease FtsH 4 from Synechocystis sp. (strain ATCC 27184 / PCC 6803 / Kazusa).